The sequence spans 381 residues: MTTSTGKINLLGLTQPEMEQFFDSIGEKRFRAGQVMKWIHHFGVDDFAAMTNVGKALREKLEAVAEIRPPEVVSEDISADGTRKWVIRVASGSCVETVYIPTDDRGTLCVSSQAGCALDCSFCSTGKQGFNSNLTAAEVIGQVWLANKSFGTVPAKIDRAITNVVMMGMGEPLLNFDNVIAAMKIMMDDLGYGISKRRVTLSTSGVVPMIDELAKHIDVSLALSLHAPNDELRNQLVPINKKYPLKMLLESCMGYMATLGGKRVLTVEYTLLKDVNDQPEHAAQMIELLRDVPCKINLIPFNPFPHSGYERPSNNAIRRFQDLLHHGGFNVTTRTTRGDDIDAACGQLVGQVNDRTRRSERYIAVRQLSADAELQDSAVRH.

Catalysis depends on Glu96, which acts as the Proton acceptor. Residues Thr102 to Asp342 form the Radical SAM core domain. A disulfide bridge connects residues Cys109 and Cys345. The [4Fe-4S] cluster site is built by Cys116, Cys120, and Cys123. Residues Gly170–Glu171, Ser202, Ser224–His226, and Asn302 each bind S-adenosyl-L-methionine. Cys345 acts as the S-methylcysteine intermediate in catalysis.

It belongs to the radical SAM superfamily. RlmN family. Requires [4Fe-4S] cluster as cofactor.

The protein resides in the cytoplasm. The catalysed reaction is adenosine(2503) in 23S rRNA + 2 reduced [2Fe-2S]-[ferredoxin] + 2 S-adenosyl-L-methionine = 2-methyladenosine(2503) in 23S rRNA + 5'-deoxyadenosine + L-methionine + 2 oxidized [2Fe-2S]-[ferredoxin] + S-adenosyl-L-homocysteine. The enzyme catalyses adenosine(37) in tRNA + 2 reduced [2Fe-2S]-[ferredoxin] + 2 S-adenosyl-L-methionine = 2-methyladenosine(37) in tRNA + 5'-deoxyadenosine + L-methionine + 2 oxidized [2Fe-2S]-[ferredoxin] + S-adenosyl-L-homocysteine. Its function is as follows. Specifically methylates position 2 of adenine 2503 in 23S rRNA and position 2 of adenine 37 in tRNAs. m2A2503 modification seems to play a crucial role in the proofreading step occurring at the peptidyl transferase center and thus would serve to optimize ribosomal fidelity. In Pseudomonas putida (strain W619), this protein is Dual-specificity RNA methyltransferase RlmN.